Reading from the N-terminus, the 237-residue chain is MLSIIRRKTRIVDITKQGNGNVPPACHLCSRRLTKEWSFGEGTICSFHRIRCRVQCGRSFWHQPETPIDGLSWDSTTWELTRISSSKDPDISGQKDKRYGRRKEKNPKTDPPALDSRVREHEPIHEHEPIPGRVGPADTKQRCKANLRGDSGFVSIGRSNHPKLSREDCHNTRVPPGTQGVRGGNVQLDKPRERPVSYQHGSKKRSEHRNPVSRSHRRKKAKTRTKTSKLGKSRDIC.

Over 1–148 (MLSIIRRKTR…TKQRCKANLR (148 aa)) the chain is Cytoplasmic. Residues 84 to 237 (SSSKDPDISG…SKLGKSRDIC (154 aa)) are disordered. 2 stretches are compositionally biased toward basic and acidic residues: residues 85–97 (SSKDPDISGQKDK) and 116–130 (SRVREHEPIHEHEPI). The chain crosses the membrane as a helical span at residues 149–165 (GDSGFVSIGRSNHPKLS). At 166 to 237 (REDCHNTRVP…SKLGKSRDIC (72 aa)) the chain is on the extracellular side. Positions 214–231 (RSHRRKKAKTRTKTSKLG) are enriched in basic residues.

It is found in the host membrane. The polypeptide is Protein VP5 (VP5) (Drosophila x virus (isolate Chung/1996) (DXV)).